We begin with the raw amino-acid sequence, 392 residues long: Magnesium-chelatase 38 kDa subunit (392 aa).

Positions 1 to 17 (MTQTANAAKKTTSTKAS) are enriched in low complexity. The segment at 1 to 21 (MTQTANAAKKTTSTKASAAKE) is disordered. Residue 80–87 (GHRGTGKS) coordinates ATP.

The protein belongs to the Mg-chelatase subunits D/I family.

It carries out the reaction protoporphyrin IX + Mg(2+) + ATP + H2O = Mg-protoporphyrin IX + ADP + phosphate + 3 H(+). It functions in the pathway porphyrin-containing compound metabolism; bacteriochlorophyll biosynthesis. In terms of biological role, involved in bacteriochlorophyll biosynthesis; introduces a magnesium ion into protoporphyrin IX to yield Mg-protoporphyrin IX. This Chlorobaculum tepidum (strain ATCC 49652 / DSM 12025 / NBRC 103806 / TLS) (Chlorobium tepidum) protein is Magnesium-chelatase 38 kDa subunit (bchI).